Reading from the N-terminus, the 1025-residue chain is MTRRILPLSLVFIPLSCISASETDTLKLPNLTFGGREIEFIVTPPSSIAAQYITYANVSNYRGNFTISSCTQDQWFSRGLSTTNSSGAFVESMTSFTAIDNADLFFCNNYCTHQGGGGAINATGLISFKNNQNILFYNNTTIGTQFTGVALRTERNRGGALYGSSIELINNHSLNFINNTSGDMGGAVSTIQNLVIKNTSGIVAFENNHTTDHIPNTFATILARGGAVGCQGACEISHNTGPVVFNSNYGGYGGAISTGGQCIFRDNKDKLIFINNSALGWHNTSAQGNGAVISAGGEFGLLNNKGPIYFENNNASYIAGAISCNNLNFQENGPIYFLNNSALYGGAFHLFASPAANYIHTGSGDIIFNNNTELSTTGMSAGLRKLFYIPGTTNNNPITLSLGAKKDTRIYFYDLFQWGGLKKANTPPENSPHTVTINPSDEFSGAVVFSYKNISSDLQAHMIASKTHNQIKDSPTTLKFGTMSIENGAEFEFFNGPLTQESTSLLALGQDSILTVGKDASLTITHLGIILPGLLNDQGTTAPRIRVNPQDMTQNTNSNQAPVSTENVATQKIFFSGLVSLVDENYESVYDSCDLSRGKANQPILHIETTNDAQLSNDWKNTLNTSLYSLPHYGYQGLWTSNWMTTTRTVSLTNSTETQTANNSIQEQKNTSETFDSNSTTTAKIPSIRASTGGTTPLATTDVTVTRHSLVVSWTPIGYIADPARRGDLIANNLVSSGRNTTLYLRSLLPDDSWFALQGSAATLFTKQQKRLDYHGYSSASKGYAISSQASGAHGHKFLFSFSQSSDTMKEKRTNNKISSRYYLSALCFEQPMFDRIALIGAAAYNYGTHKTYNFYGTKKFSKGNFHSTTLGGSLRCELRDSMPFQSIMLTPFIQALISRTEPASIQEQGDLARLFSLKQPHTAVVSPIGIKGVYSSNKWPTVSCEMEVAYQPTLYWKRPILNTVLIKNNGSWETTNTPLAKHSFYGRGSSSLKFSYLKLFANYQAQVATSTVSHYMNAGGALVF.

Positions 1–20 (MTRRILPLSLVFIPLSCISA) are cleaved as a signal peptide. The tract at residues 654-681 (NSTETQTANNSIQEQKNTSETFDSNSTT) is disordered. Over residues 659–681 (QTANNSIQEQKNTSETFDSNSTT) the composition is skewed to polar residues. In terms of domain architecture, Autotransporter spans 748–1025 (LLPDDSWFAL…YMNAGGALVF (278 aa)).

The protein belongs to the PMP outer membrane protein family.

The protein resides in the secreted. Its subcellular location is the cell wall. The protein localises to the cell outer membrane. The sequence is that of Probable outer membrane protein PmpF (pmpF) from Chlamydia muridarum (strain MoPn / Nigg).